The chain runs to 530 residues: Phosphoenolpyruvate carboxykinase (ATP) 2 (530 aa).

Substrate-binding residues include arginine 54, tyrosine 191, and lysine 197. ATP-binding positions include lysine 197, histidine 216, and 232 to 240; that span reads GLSGTGKTT. Residues lysine 197 and histidine 216 each coordinate Mn(2+). Aspartate 253 contributes to the Mn(2+) binding site. Residues glutamate 281, arginine 318, 437 to 438, and threonine 443 contribute to the ATP site; that span reads RV. Arginine 318 provides a ligand contact to substrate.

Belongs to the phosphoenolpyruvate carboxykinase (ATP) family. Requires Mn(2+) as cofactor.

It localises to the cytoplasm. It carries out the reaction oxaloacetate + ATP = phosphoenolpyruvate + ADP + CO2. It participates in carbohydrate biosynthesis; gluconeogenesis. Its function is as follows. Involved in the gluconeogenesis. Catalyzes the conversion of oxaloacetate (OAA) to phosphoenolpyruvate (PEP) through direct phosphoryl transfer between the nucleoside triphosphate and OAA. The chain is Phosphoenolpyruvate carboxykinase (ATP) 2 from Salinibacter ruber (strain DSM 13855 / M31).